Consider the following 131-residue polypeptide: Small ribosomal subunit protein uS8 (131 aa).

The protein belongs to the universal ribosomal protein uS8 family. Part of the 30S ribosomal subunit. Contacts proteins S5 and S12.

Its function is as follows. One of the primary rRNA binding proteins, it binds directly to 16S rRNA central domain where it helps coordinate assembly of the platform of the 30S subunit. The protein is Small ribosomal subunit protein uS8 of Legionella pneumophila subsp. pneumophila (strain Philadelphia 1 / ATCC 33152 / DSM 7513).